A 273-amino-acid polypeptide reads, in one-letter code: Undecaprenyl-diphosphatase (273 aa).

7 helical membrane passes run 6–26 (SLLI…LPVS), 45–65 (AKTF…VMFW), 90–110 (LTLI…LLFH), 116–136 (LFNP…LIAA), 190–210 (YAAS…ATAL), 222–242 (GDIP…LIAI), and 252–272 (ISFI…YVVF).

It belongs to the UppP family.

The protein localises to the cell inner membrane. It catalyses the reaction di-trans,octa-cis-undecaprenyl diphosphate + H2O = di-trans,octa-cis-undecaprenyl phosphate + phosphate + H(+). Its function is as follows. Catalyzes the dephosphorylation of undecaprenyl diphosphate (UPP). Confers resistance to bacitracin. The chain is Undecaprenyl-diphosphatase from Escherichia coli O139:H28 (strain E24377A / ETEC).